A 473-amino-acid polypeptide reads, in one-letter code: MLKIFNTLTKKKEKFIPINAGKIKIYVCGVTVYDLCHLGHARTFIVFDSVIRYLRHCGYQVSYVRNITDIDDKIIKRAYENNETTQQLTNRMIQEMHLDLDALNILRPNYEPKVTEHIDIIIKFICLLISKKHAYTAPNGDIMFSVETMHNYGVLSNKENPPKIHDNILKIPNIKKNPMDFVLWKKTTYNNKLGEPCWSSPWGLGRPGWHIECSAMNYSIFGNQIDIHGGGSDLIFPHHDNEIAQSVCAHETSYANIWMHSGLLLLNYEKMSKSLNNFFTIRDILKHYDPETIRFFLMSAHYRSQLKYNDNNLKNAQTSLKRLYIALRDTNPTIQPNGGDNEGEYFISKFISKMNDDFNTPEAYSVLFDIAHRLNNLKIKGHSLLAQGMAATLKYLANIIGLLHQNPEIFLKKITLKHNKNRHFEKIQKLIQCREVARKNNQWELADSIRKKLTVMGITLEDGPTGITKWHFK.

Position 28 (Cys-28) interacts with Zn(2+). The 'HIGH' region signature appears at 30–40 (VTVYDLCHLGH). Zn(2+)-binding residues include Cys-213, His-238, and Glu-242. The short motif at 270-274 (KMSKS) is the 'KMSKS' region element. Lys-273 is a binding site for ATP.

It belongs to the class-I aminoacyl-tRNA synthetase family. Monomer. It depends on Zn(2+) as a cofactor.

The protein localises to the cytoplasm. It catalyses the reaction tRNA(Cys) + L-cysteine + ATP = L-cysteinyl-tRNA(Cys) + AMP + diphosphate. The protein is Cysteine--tRNA ligase of Blochmanniella pennsylvanica (strain BPEN).